The following is a 597-amino-acid chain: uncharacterized protein (597 aa).

Helical transmembrane passes span 4–23 and 209–231; these read LLLALLLCLAVGTAGGFKIV and FVSVSAPGFVGVTAAMSSAGIAI.

Its subcellular location is the cell membrane. This is an uncharacterized protein from Archaeoglobus fulgidus (strain ATCC 49558 / DSM 4304 / JCM 9628 / NBRC 100126 / VC-16).